The chain runs to 185 residues: Ubiquitin-conjugating enzyme E2 2 (185 aa).

The 147-residue stretch at 4 to 150 (PSKKRLIRDF…VKATVEASWL (147 aa)) folds into the UBC core domain. C88 (glycyl thioester intermediate) is an active-site residue. Residues 149–173 (WLDDGEMPESIEEDDEAEAEAEAEA) are compositionally biased toward acidic residues. Residues 149 to 185 (WLDDGEMPESIEEDDEAEAEAEAEATVDRSAPQTASA) are disordered.

Belongs to the ubiquitin-conjugating enzyme family.

Its subcellular location is the cytoplasm. The protein localises to the nucleus. The catalysed reaction is S-ubiquitinyl-[E1 ubiquitin-activating enzyme]-L-cysteine + [E2 ubiquitin-conjugating enzyme]-L-cysteine = [E1 ubiquitin-activating enzyme]-L-cysteine + S-ubiquitinyl-[E2 ubiquitin-conjugating enzyme]-L-cysteine.. Its pathway is protein modification; protein ubiquitination. Functionally, catalyzes the covalent attachment of ubiquitin to other proteins. Plays a role in transcription regulation by catalyzing the monoubiquitination of histone H2B to form H2BK123ub1. H2BK123ub1 gives a specific tag for epigenetic transcriptional activation and is also a prerequisite for H3K4me and H3K79me formation. Also involved in postreplication repair of UV-damaged DNA, in N-end rule-dependent protein degradation and in sporulation. The protein is Ubiquitin-conjugating enzyme E2 2 (UBC2) of Mycosarcoma maydis (Corn smut fungus).